We begin with the raw amino-acid sequence, 607 residues long: UPF0329 protein ECU06_1610 (607 aa).

Disordered stretches follow at residues 312–410 (VHEV…RSKG) and 531–570 (TSSE…PPGV). Positions 313 to 347 (HEVKERESEEKRREEESLRNAEELLRMEEREKGEG) are enriched in basic and acidic residues. A compositionally biased stretch (basic residues) spans 353-364 (KGKKKRGKKGAG). The span at 365–374 (KAKEESKEED) shows a compositional bias: basic and acidic residues. A compositionally biased stretch (acidic residues) spans 375-393 (RGEEEEESVEAEVPVEEMA). Residues 531–543 (TSSEKTGKGSSPS) show a composition bias toward polar residues. Positions 549–558 (DVDEIEEDGS) are enriched in acidic residues.

Belongs to the UPF0329 family.

The chain is UPF0329 protein ECU06_1610 from Encephalitozoon cuniculi (strain GB-M1) (Microsporidian parasite).